The sequence spans 493 residues: Activin receptor type-1C (493 aa).

The N-terminal stretch at 1–25 is a signal peptide; the sequence is MTPARRSALSLALLLVALASDLAAG. At 26–113 the chain is on the extracellular side; that stretch reads LKCVCLLCDS…PDAPRLGPTE (88 aa). A helical transmembrane segment spans residues 114–134; it reads LTVVITVPVCLLSIAAMLTIW. The Cytoplasmic portion of the chain corresponds to 135-493; it reads ACQDRQCTYR…QLCVKEDCKA (359 aa). In terms of domain architecture, GS spans 165–194; it reads KTLKDLIYDATASGSGSGPPLLVQRTIART. A Protein kinase domain is found at 195-485; sequence IVLQEIVGKG…LRVKKTISQL (291 aa). ATP is bound by residues 201-209 and K222; that span reads VGKGRFGEV. The active-site Proton acceptor is the D323.

Belongs to the protein kinase superfamily. TKL Ser/Thr protein kinase family. TGFB receptor subfamily. Binds the type 2 receptor protein ACVR2A. Requires Mg(2+) as cofactor. Mn(2+) serves as cofactor. As to expression, expressed in brain, kidney, lung, liver, testis, ovary, adrenal gland, heart, prostate, gastrointestinal tract, and spleen. Distributed throughout both adult and embryonic central nervous system and pancreatic islet cells.

The protein localises to the membrane. The enzyme catalyses L-threonyl-[receptor-protein] + ATP = O-phospho-L-threonyl-[receptor-protein] + ADP + H(+). It carries out the reaction L-seryl-[receptor-protein] + ATP = O-phospho-L-seryl-[receptor-protein] + ADP + H(+). Functionally, serine/threonine protein kinase which forms a receptor complex on ligand binding. The receptor complex consists of 2 type II and 2 type I transmembrane serine/threonine kinases. Type II receptors phosphorylate and activate type I receptors which autophosphorylate, then bind and activate SMAD transcriptional regulators, SMAD2 and SMAD3. Receptor for activin AB, activin B, activin E and NODAL. Upon NODAL binding, activation results in increased apoptosis and reduced proliferation through suppression of AKT signaling and the activation of Smad2-dependent signaling pathway in pancreatic beta-cells, trophoblasts, epithelial or neuronal cells. Acts as a positive regulator for macrophage activation partially through down-regulation of PPARG expression. This is Activin receptor type-1C from Rattus norvegicus (Rat).